The sequence spans 43 residues: Neurotrophin-4 (43 aa).

Belongs to the NGF-beta family.

Functionally, NT-4 could play a role in oogenesis and/or early embryogenesis. NT-4 interacts with the low affinity NGF receptor and elicits neurite outgrowth from explanted dorsal root ganglia with no and lower activity in sympathetic and nodose ganglia, respectively. This is Neurotrophin-4 (NTF4) from Macrovipera lebetinus (Levantine viper).